The primary structure comprises 279 residues: Movement protein (279 aa).

A disordered region spans residues Ser-246–Leu-279. Over residues Glu-254–Ser-268 the composition is skewed to low complexity.

Belongs to the cucumovirus movement protein family.

The protein localises to the host cell junction. It localises to the host plasmodesma. Functionally, transports viral genome to neighboring plant cells directly through plasmosdesmata, without any budding. The movement protein allows efficient cell to cell propagation, by bypassing the host cell wall barrier. Acts by forming a tubular structure at the host plasmodesmata, enlarging it enough to allow free passage of virion capsids. In Cucumber mosaic virus (strain CS) (CMV), this protein is Movement protein.